We begin with the raw amino-acid sequence, 276 residues long: Small ribosomal subunit protein uS2 (276 aa).

Belongs to the universal ribosomal protein uS2 family.

This is Small ribosomal subunit protein uS2 from Chlamydia abortus (strain DSM 27085 / S26/3) (Chlamydophila abortus).